Reading from the N-terminus, the 711-residue chain is MAEPTATREQAQQRMAQLRGEISEHDYHYYVLDRPTISDAEYDALFRELQRLEAAYPDLVSSDSPTQRVAGTAQEGFEAVVHDTPMLSLDNAFEADDLVDFDRRIRDRLGVASVVYTGEPKLDGISLSLTYQDGELVRAGTRGDGHTGEDVTANVRTLRSVPLRLRGDGYPGRLEVRGEVVIRKEDFERLNQARLDAGERPFANPRNAAAGSLRQLDPRITARRPLTLFTFGVGDPLALGVESHWQVLECLAGWGFRTTAPLEHLEGVSACQAYRDRLIEERDALPFEIDGAVFKVDDLAVREQLGFTARAPRWALAFKLPAREATTVVEAIVPSVGRTGKITPLARLQPVEVSGVTVARASLHNADELARMDVREGDTVMVRRAGDVIPQITDVVLAKRPEGAQPWRFEERVQACPECGSAVQRIEGEAAHRCVGGLYCPAQREGAILHFASRRALDIDGLGEKIVEQLVAKGLVVDLADLFRLGHAQLAGLERMGDKSADNLLAALDRARSTTLARFLYALGIPHVGEVTARRLAEAAYGLMVAVPRGDRAALRAAAGLDAQTAITSEALLRVMAAPADDLEAIEDVGPVVARAIAGFFAEPHNRQVVDHLCAAGVHWPEPDPPEQAESVSSLAGRAFVVTGTLETMTRDEAKAAIEACGGRVTGSVSRKTDYLVAGADAGSKLNKARELGVEVVNESGLRELLAGAGA.

NAD(+) contacts are provided by residues 39 to 43 (DAEYD), 88 to 89 (SL), and glutamate 119. Lysine 121 acts as the N6-AMP-lysine intermediate in catalysis. NAD(+)-binding residues include arginine 142, glutamate 179, lysine 295, and lysine 319. Residues cysteine 416, cysteine 419, cysteine 434, and cysteine 440 each coordinate Zn(2+). A BRCT domain is found at 630–711 (ESVSSLAGRA…LRELLAGAGA (82 aa)).

Belongs to the NAD-dependent DNA ligase family. LigA subfamily. It depends on Mg(2+) as a cofactor. Mn(2+) is required as a cofactor.

The catalysed reaction is NAD(+) + (deoxyribonucleotide)n-3'-hydroxyl + 5'-phospho-(deoxyribonucleotide)m = (deoxyribonucleotide)n+m + AMP + beta-nicotinamide D-nucleotide.. Functionally, DNA ligase that catalyzes the formation of phosphodiester linkages between 5'-phosphoryl and 3'-hydroxyl groups in double-stranded DNA using NAD as a coenzyme and as the energy source for the reaction. It is essential for DNA replication and repair of damaged DNA. The sequence is that of DNA ligase from Halorhodospira halophila (strain DSM 244 / SL1) (Ectothiorhodospira halophila (strain DSM 244 / SL1)).